The primary structure comprises 255 residues: Post-GPI attachment to proteins factor 2 (255 aa).

A run of 6 helical transmembrane segments spans residues 25–45 (LAAL…SLLF), 80–100 (LAIF…LEYY), 111–131 (LGIL…CLSF), 143–163 (NAFV…YLLN), 185–205 (LFLV…RHNA), and 209–229 (AGVY…NMGF).

This sequence belongs to the PGAP2 family.

The protein localises to the golgi apparatus membrane. Its subcellular location is the endoplasmic reticulum membrane. Its function is as follows. Involved in the lipid remodeling steps of GPI-anchor maturation. Required for stable expression of GPI-anchored proteins at the cell surface. In Drosophila pseudoobscura pseudoobscura (Fruit fly), this protein is Post-GPI attachment to proteins factor 2.